Consider the following 871-residue polypeptide: DNA mismatch repair protein MutS (871 aa).

Residue 630–637 (GPNMGGKS) coordinates ATP. The tract at residues 830–849 (KEEPESKSASPVEAALAGIN) is disordered.

Belongs to the DNA mismatch repair MutS family.

This protein is involved in the repair of mismatches in DNA. It is possible that it carries out the mismatch recognition step. This protein has a weak ATPase activity. The chain is DNA mismatch repair protein MutS from Verminephrobacter eiseniae (strain EF01-2).